Reading from the N-terminus, the 324-residue chain is NADH-cytochrome b5 reductase 2 (324 aa).

A helical transmembrane segment spans residues 31-47 (IPLIGGITLAAGAGYYY). An FAD-binding FR-type domain is found at 70 to 178 (QGWIGLKLAH…KGPLPKYPWE (109 aa)). 181–216 (KHDHICLIAGGTGITPMYQLVRKIFSNPEDKTKVTL) contacts FAD.

The protein belongs to the flavoprotein pyridine nucleotide cytochrome reductase family. FAD serves as cofactor.

The protein localises to the mitochondrion outer membrane. The enzyme catalyses 2 Fe(III)-[cytochrome b5] + NADH = 2 Fe(II)-[cytochrome b5] + NAD(+) + H(+). In terms of biological role, may mediate the reduction of outer membrane cytochrome b5. This Ajellomyces capsulatus (strain NAm1 / WU24) (Darling's disease fungus) protein is NADH-cytochrome b5 reductase 2 (MCR1).